The sequence spans 325 residues: Probable flavonol synthase 5 (325 aa).

Residues 1–21 (MEEERDHNASESSLPSLSKQL) are disordered. Residues 10 to 21 (SESSLPSLSKQL) show a composition bias toward polar residues. Residues 180-280 (TAEYVLRVNF…RISWPVFVAP (101 aa)) enclose the Fe2OG dioxygenase domain. 188 to 190 (NFY) contacts 2-oxoglutarate. Fe cation-binding residues include histidine 205, aspartate 207, and histidine 261. A 2-oxoglutarate-binding site is contributed by 271-273 (RIS).

It belongs to the iron/ascorbate-dependent oxidoreductase family. It depends on Fe(2+) as a cofactor. In terms of tissue distribution, expressed in young seedlings.

It carries out the reaction a (2R,3R)-dihydroflavonol + 2-oxoglutarate + O2 = a flavonol + succinate + CO2 + H2O. It participates in secondary metabolite biosynthesis; flavonoid biosynthesis. The sequence is that of Probable flavonol synthase 5 (FLS5) from Arabidopsis thaliana (Mouse-ear cress).